The sequence spans 132 residues: Translation initiation factor 5A (132 aa).

At Lys36 the chain carries Hypusine.

This sequence belongs to the eIF-5A family.

It localises to the cytoplasm. Functionally, functions by promoting the formation of the first peptide bond. In Caldivirga maquilingensis (strain ATCC 700844 / DSM 13496 / JCM 10307 / IC-167), this protein is Translation initiation factor 5A (eIF5A).